Here is a 264-residue protein sequence, read N- to C-terminus: Small ribosomal subunit protein uS2 (264 aa).

The protein belongs to the universal ribosomal protein uS2 family.

This Synechococcus sp. (strain JA-2-3B'a(2-13)) (Cyanobacteria bacterium Yellowstone B-Prime) protein is Small ribosomal subunit protein uS2.